A 152-amino-acid polypeptide reads, in one-letter code: METPRPVVSRRPFCCTLKCFVKFLRLVVTVTSMIFFIVGQAPEPYIVITGFEVTVIFCFLVLYTCGLDKIMRSFFWPLLDVINSMVTALCMLIVSVLALIPETSTKTILGGVFGFLTVTCTIADCALMCQKLRFRPRQPYQKKSTNDIDDRE.

The region spanning 13–133 is the MARVEL domain; it reads FCCTLKCFVK…DCALMCQKLR (121 aa). 4 helical membrane passes run 19-39, 46-66, 81-101, and 108-128; these read CFVK…FIVG, IVIT…YTCG, VINS…ALIP, and ILGG…CALM.

The protein belongs to the chemokine-like factor family. In terms of tissue distribution, ubiquitous.

It localises to the membrane. Its function is as follows. May play an important role in inflammation and regeneration of skeletal muscle. Essential for embryonic development. The chain is Chemokine-like factor (Cklf) from Mus musculus (Mouse).